A 31-amino-acid polypeptide reads, in one-letter code: M-poneritoxin-Nc3b (31 aa).

The protein belongs to the ponericin-G family. Expressed by the venom gland.

It localises to the secreted. It is found in the target cell membrane. Functionally, membrane-perturbating peptide with a few moderate activities. It is insecticidal, since it induces reversible paralysis in insects (L.cuprina) after 1 hour, but fails to kill them. It is also antiparasitic, since it moderately inhibits the larval development of the major pathogenic nematode of ruminants (H.contortus, IC(50)=23.2 uM) and reduces the motility of adult males of the other nematode B.malayi. It does not show antibacterial activity (MIC&gt;40 uM). It is not cytotoxic to HEK293 cells and does not induce hemolysis in human erythrocytes. It does not cause an increase in intracellular calcium concentration on neuronal and epithelial cell lines. The protein is M-poneritoxin-Nc3b of Neoponera commutata (Large hunting ant).